Consider the following 348-residue polypeptide: Major outer membrane protein (348 aa).

An N-terminal signal peptide occupies residues 1–20; sequence MKKTIVALAVAAVAATSANA.

Disulfide bond interactions within and between MOMP molecules and other components form high molecular-weight oligomers.

It localises to the cell outer membrane. In terms of biological role, structural rigidity of the outer membrane of elementary bodies and porin forming, permitting diffusion of solutes through the intracellular reticulate body membrane. The chain is Major outer membrane protein (ompH) from Pasteurella multocida (strain Pm70).